The primary structure comprises 334 residues: Ornithine carbamoyltransferase (334 aa).

Carbamoyl phosphate is bound by residues 57–60 (STRT), glutamine 84, arginine 108, and 135–138 (HPTQ). Residues asparagine 169, aspartate 233, and 237-238 (SM) each bind L-ornithine. Carbamoyl phosphate is bound by residues 275-276 (CL) and arginine 320.

It belongs to the aspartate/ornithine carbamoyltransferase superfamily. OTCase family. As to quaternary structure, homotrimer.

The protein localises to the cytoplasm. It carries out the reaction carbamoyl phosphate + L-ornithine = L-citrulline + phosphate + H(+). It functions in the pathway amino-acid biosynthesis; L-arginine biosynthesis; L-arginine from L-ornithine and carbamoyl phosphate: step 1/3. Functionally, reversibly catalyzes the transfer of the carbamoyl group from carbamoyl phosphate (CP) to the N(epsilon) atom of ornithine (ORN) to produce L-citrulline. This is Ornithine carbamoyltransferase from Vibrio vulnificus (strain CMCP6).